We begin with the raw amino-acid sequence, 310 residues long: HPr kinase/phosphorylase (310 aa).

Active-site residues include histidine 138 and lysine 159. ATP is bound at residue glycine 153 to serine 160. Position 160 (serine 160) interacts with Mg(2+). The Proton acceptor; for phosphorylation activity. Proton donor; for dephosphorylation activity role is filled by aspartate 177. The tract at residues leucine 201–asparagine 210 is important for the catalytic mechanism of both phosphorylation and dephosphorylation. A Mg(2+)-binding site is contributed by glutamate 202. Residue arginine 243 is part of the active site. An important for the catalytic mechanism of dephosphorylation region spans residues proline 264–arginine 269.

Belongs to the HPrK/P family. In terms of assembly, homohexamer. Requires Mg(2+) as cofactor.

The catalysed reaction is [HPr protein]-L-serine + ATP = [HPr protein]-O-phospho-L-serine + ADP + H(+). It carries out the reaction [HPr protein]-O-phospho-L-serine + phosphate + H(+) = [HPr protein]-L-serine + diphosphate. In terms of biological role, catalyzes the ATP- as well as the pyrophosphate-dependent phosphorylation of a specific serine residue in HPr, a phosphocarrier protein of the phosphoenolpyruvate-dependent sugar phosphotransferase system (PTS). HprK/P also catalyzes the pyrophosphate-producing, inorganic phosphate-dependent dephosphorylation (phosphorolysis) of seryl-phosphorylated HPr (P-Ser-HPr). The two antagonistic activities of HprK/P are regulated by several intracellular metabolites, which change their concentration in response to the absence or presence of rapidly metabolisable carbon sources (glucose, fructose, etc.) in the growth medium. Also phosphorylates/dephosphorylates the HPr-like catabolite repression protein crh on a specific serine residue. Therefore, by controlling the phosphorylation state of HPr and crh, HPrK/P is a sensor enzyme that plays a major role in the regulation of carbon metabolism and sugar transport: it mediates carbon catabolite repression (CCR), and regulates PTS-catalyzed carbohydrate uptake and inducer exclusion. In Bacillus licheniformis (strain ATCC 14580 / DSM 13 / JCM 2505 / CCUG 7422 / NBRC 12200 / NCIMB 9375 / NCTC 10341 / NRRL NRS-1264 / Gibson 46), this protein is HPr kinase/phosphorylase.